A 380-amino-acid chain; its full sequence is Pregnancy-associated glycoprotein 1 (380 aa).

Residues 1–15 form the signal peptide; that stretch reads MKWLVLLGLVAFSEC. Positions 16–53 are cleaved as a propeptide — activation peptide; sequence IVKIPLRRLKTMRNVVSGKNMLNNFLKEHAYSLSQISF. 2 N-linked (GlcNAc...) asparagine glycosylation sites follow: asparagine 57 and asparagine 74. The Peptidase A1 domain occupies 71 to 377; it reads YMGNITIGTP…DRGNDRIGLA (307 aa). Residue aspartate 89 is part of the active site. The cysteines at positions 102 and 107 are disulfide-linked. Asparagine 125 and asparagine 182 each carry an N-linked (GlcNAc...) asparagine glycan. Cysteine 261 and cysteine 265 are joined by a disulfide. Aspartate 270 is a catalytic residue. A disulfide bond links cysteine 303 and cysteine 337.

Belongs to the peptidase A1 family. N-Glycosylated; the glycans terminate in either N-acetyl-galactosamine (GalNAc) or N-acetyllactosamine. Terminal GalNAc on Asn-linked glycans is greatly reduced prior to parturition while lactosamine-type N-glycans remain unaltered. Trophoblast and placental tissue. Produced specifically in the invasive binucleate cells of the placenta. Becomes detectable in maternal serum soon after implantation.

It is found in the secreted. It localises to the extracellular space. Appears to be proteolytically inactive. The protein is Pregnancy-associated glycoprotein 1 of Bos taurus (Bovine).